The following is a 953-amino-acid chain: Dual serine/threonine and tyrosine protein kinase (953 aa).

A Protein kinase domain is found at 665–926 (PKLEREIGRG…VQSKLQDIYT (262 aa)). ATP-binding positions include 671 to 679 (IGRGQYGVV) and Lys694. Asp791 functions as the Proton acceptor in the catalytic mechanism. The disordered stretch occupies residues 932 to 953 (REAEGGGGGGAKEQQNLKSDTL).

Belongs to the protein kinase superfamily. Ser/Thr protein kinase family.

The protein resides in the cytoplasm. Its subcellular location is the cell membrane. The protein localises to the apical cell membrane. It localises to the basolateral cell membrane. It is found in the cell junction. It catalyses the reaction L-seryl-[protein] + ATP = O-phospho-L-seryl-[protein] + ADP + H(+). The catalysed reaction is L-threonyl-[protein] + ATP = O-phospho-L-threonyl-[protein] + ADP + H(+). The enzyme catalyses L-tyrosyl-[protein] + ATP = O-phospho-L-tyrosyl-[protein] + ADP + H(+). In terms of biological role, may act as a positive regulator of ERK phosphorylation downstream of fibroblast growth factor-receptor activation. May induce both caspase-dependent apoptosis and caspase-independent cell death. May play a role in the embryonic development. In Strongylocentrotus purpuratus (Purple sea urchin), this protein is Dual serine/threonine and tyrosine protein kinase.